The sequence spans 922 residues: Ubiquitin carboxyl-terminal hydrolase 29 (922 aa).

The tract at residues 160-196 is disordered; sequence GILENQGGKGQNTLSSDVQTNEDILKEDNPVPNKKYK. Residues 170-181 are compositionally biased toward polar residues; it reads QNTLSSDVQTNE. The 601-residue stretch at 285–885 folds into the USP domain; that stretch reads QGFPNLGNTC…SGYIFFYMHN (601 aa). Catalysis depends on Cys-294, which acts as the Nucleophile. His-840 functions as the Proton acceptor in the catalytic mechanism.

It belongs to the peptidase C19 family.

It localises to the cytoplasm. It is found in the perinuclear region. It carries out the reaction Thiol-dependent hydrolysis of ester, thioester, amide, peptide and isopeptide bonds formed by the C-terminal Gly of ubiquitin (a 76-residue protein attached to proteins as an intracellular targeting signal).. Its function is as follows. Deubiquitinase involved in innate antiviral immunity by mediating 'Lys-48'-linked deubiquitination of CGAS, thereby promoting its stabilization. The chain is Ubiquitin carboxyl-terminal hydrolase 29 from Homo sapiens (Human).